The chain runs to 494 residues: Ketol-acid reductoisomerase (NADP(+)) (494 aa).

Residues 14-208 form the KARI N-terminal Rossmann domain; sequence LDQLGRCRFM…GGHRAGCLES (195 aa). Residues 45–48, R68, R76, S78, and 108–110 each bind NADP(+); these read CGAQ and DKQ. Residue H132 is part of the active site. G158 contacts NADP(+). 2 KARI C-terminal knotted domains span residues 209–344 and 345–487; these read SFVA…NYPS and TDVE…MTDM. Positions 217, 221, 389, and 393 each coordinate Mg(2+). Residue S414 participates in substrate binding.

This sequence belongs to the ketol-acid reductoisomerase family. Requires Mg(2+) as cofactor.

The enzyme catalyses (2R)-2,3-dihydroxy-3-methylbutanoate + NADP(+) = (2S)-2-acetolactate + NADPH + H(+). It catalyses the reaction (2R,3R)-2,3-dihydroxy-3-methylpentanoate + NADP(+) = (S)-2-ethyl-2-hydroxy-3-oxobutanoate + NADPH + H(+). Its pathway is amino-acid biosynthesis; L-isoleucine biosynthesis; L-isoleucine from 2-oxobutanoate: step 2/4. It functions in the pathway amino-acid biosynthesis; L-valine biosynthesis; L-valine from pyruvate: step 2/4. In terms of biological role, involved in the biosynthesis of branched-chain amino acids (BCAA). Catalyzes an alkyl-migration followed by a ketol-acid reduction of (S)-2-acetolactate (S2AL) to yield (R)-2,3-dihydroxy-isovalerate. In the isomerase reaction, S2AL is rearranged via a Mg-dependent methyl migration to produce 3-hydroxy-3-methyl-2-ketobutyrate (HMKB). In the reductase reaction, this 2-ketoacid undergoes a metal-dependent reduction by NADPH to yield (R)-2,3-dihydroxy-isovalerate. This Vibrio vulnificus (strain CMCP6) protein is Ketol-acid reductoisomerase (NADP(+)).